The chain runs to 399 residues: Cyclic dehypoxanthine futalosine synthase (399 aa).

The Radical SAM core domain occupies 56-288 (ATYIIERNIN…IAIARVFLDN (233 aa)). [4Fe-4S] cluster-binding residues include Cys70, Cys74, and Cys77.

It belongs to the radical SAM superfamily. MqnC family. It depends on [4Fe-4S] cluster as a cofactor.

It catalyses the reaction dehypoxanthine futalosine + S-adenosyl-L-methionine = cyclic dehypoxanthinylfutalosinate + 5'-deoxyadenosine + L-methionine + H(+). The protein operates within quinol/quinone metabolism; menaquinone biosynthesis. Functionally, radical SAM enzyme that catalyzes the cyclization of dehypoxanthine futalosine (DHFL) into cyclic dehypoxanthine futalosine (CDHFL), a step in the biosynthesis of menaquinone (MK, vitamin K2). The protein is Cyclic dehypoxanthine futalosine synthase of Streptomyces coelicolor (strain ATCC BAA-471 / A3(2) / M145).